The primary structure comprises 586 residues: Phosphomethylpyrimidine synthase (586 aa).

The disordered stretch occupies residues 1–59 (MKQSVSAEQIELKSSLPGSKKVYVDGPREGMKVPMREIEQSDTNGVPNPPIRVYDTSGP). Over residues 22 to 39 (VYVDGPREGMKVPMREIE) the composition is skewed to basic and acidic residues. Substrate-binding positions include Asn-193, Met-222, Tyr-251, His-287, 307-309 (SRG), 348-351 (DGLR), and Glu-387. His-391 contributes to the Zn(2+) binding site. Tyr-414 lines the substrate pocket. His-455 is a Zn(2+) binding site. Cys-535, Cys-538, and Cys-543 together coordinate [4Fe-4S] cluster.

It belongs to the ThiC family. Requires [4Fe-4S] cluster as cofactor.

The catalysed reaction is 5-amino-1-(5-phospho-beta-D-ribosyl)imidazole + S-adenosyl-L-methionine = 4-amino-2-methyl-5-(phosphooxymethyl)pyrimidine + CO + 5'-deoxyadenosine + formate + L-methionine + 3 H(+). Its pathway is cofactor biosynthesis; thiamine diphosphate biosynthesis. Functionally, catalyzes the synthesis of the hydroxymethylpyrimidine phosphate (HMP-P) moiety of thiamine from aminoimidazole ribotide (AIR) in a radical S-adenosyl-L-methionine (SAM)-dependent reaction. The polypeptide is Phosphomethylpyrimidine synthase (Bacillus cereus (strain Q1)).